The following is a 624-amino-acid chain: DNA mismatch repair protein MutL (624 aa).

Residues 336-357 (GEGFHETSDSFSSRSSQHSDAR) form a disordered region. The span at 344 to 353 (DSFSSRSSQH) shows a compositional bias: low complexity.

It belongs to the DNA mismatch repair MutL/HexB family.

Functionally, this protein is involved in the repair of mismatches in DNA. It is required for dam-dependent methyl-directed DNA mismatch repair. May act as a 'molecular matchmaker', a protein that promotes the formation of a stable complex between two or more DNA-binding proteins in an ATP-dependent manner without itself being part of a final effector complex. In Chlorobium phaeobacteroides (strain BS1), this protein is DNA mismatch repair protein MutL.